The following is a 512-amino-acid chain: Centrosomal protein CCDC61 (512 aa).

N-acetylmethionine is present on M1. The head domain stretch occupies residues 1–142 (MEQPAGLQVD…PLPLPYQGKP (142 aa)). Coiled coils occupy residues 176–203 (WHLREQVTRLASEKRELEAQLGRSREEA) and 246–273 (RRLAKELEEVKASERNLRARLKTLNCEL). T282 carries the post-translational modification Phosphothreonine. Disordered regions lie at residues 282-415 (TLPA…SFRS) and 430-472 (SQSV…HLAS). The span at 287-300 (AREDRALSSRERST) shows a compositional bias: basic and acidic residues. S328, S330, S372, and S375 each carry phosphoserine. Positions 406–415 (RSSSVDSFRS) are enriched in low complexity. A phosphoserine mark is found at S447 and S473.

Belongs to the CCDC61 family. In terms of assembly, forms homodimers (via head domain). Interacts with CEP170. Interacts with PCM1 and CEP131. Binds tubulin.

It localises to the cytoplasm. Its subcellular location is the cytoskeleton. The protein localises to the microtubule organizing center. The protein resides in the centrosome. It is found in the centriolar satellite. It localises to the cilium basal body. Microtubule-binding centrosomal protein required for centriole cohesion, independently of the centrosome-associated protein/CEP250 and rootletin/CROCC linker. In interphase, required for anchoring microtubule at the mother centriole subdistal appendages and for centrosome positioning. During mitosis, may be involved in spindle assembly and chromatin alignment by regulating the organization of spindle microtubules into a symmetrical structure. Plays a non-essential role in ciliogenesis. The sequence is that of Centrosomal protein CCDC61 from Rattus norvegicus (Rat).